We begin with the raw amino-acid sequence, 338 residues long: Acyl-CoA Delta(11) desaturase (338 aa).

The next 2 helical transmembrane spans lie at 33 to 53 and 61 to 81; these read IVYF…YGLY and WATV…VTAG. The Histidine box-1 motif lies at 83–88; it reads HRLWSH. Residues 97 to 117 form a helical membrane-spanning segment; the sequence is LQILLMVMNSLAFQNTVIDWV. A Histidine box-2 motif is present at residues 120–124; sequence HRLHH. The next 2 membrane-spanning stretches (helical) occupy residues 181–201 and 212–234; these read AIPF…VYGW and AMLR…HIYG. Positions 260 to 264 match the Histidine box-3 motif; that stretch reads HNYHH. Residues 318–338 form a disordered region; that stretch reads TNLWGLEDVDTPEDLKNTKGE.

Belongs to the fatty acid desaturase type 1 family. It depends on Fe cation as a cofactor. As to expression, detected in the pheromone gland.

Its subcellular location is the membrane. It carries out the reaction an 11,12-saturated fatty acyl-CoA + 2 Fe(II)-[cytochrome b5] + O2 + 2 H(+) = an (11Z)-Delta(11)-fatty acyl-CoA + 2 Fe(III)-[cytochrome b5] + 2 H2O. Functionally, catalyzes the formation of delta(11) fatty acyl precursors in the pheromone gland, and has high activity towards palmitic acid and stearic acid. The chain is Acyl-CoA Delta(11) desaturase from Spodoptera littoralis (Egyptian cotton leafworm).